The following is a 254-amino-acid chain: Imidazole glycerol phosphate synthase subunit HisF (254 aa).

Residues Asp11 and Asp130 contribute to the active site.

Belongs to the HisA/HisF family. Heterodimer of HisH and HisF.

It localises to the cytoplasm. The enzyme catalyses 5-[(5-phospho-1-deoxy-D-ribulos-1-ylimino)methylamino]-1-(5-phospho-beta-D-ribosyl)imidazole-4-carboxamide + L-glutamine = D-erythro-1-(imidazol-4-yl)glycerol 3-phosphate + 5-amino-1-(5-phospho-beta-D-ribosyl)imidazole-4-carboxamide + L-glutamate + H(+). The protein operates within amino-acid biosynthesis; L-histidine biosynthesis; L-histidine from 5-phospho-alpha-D-ribose 1-diphosphate: step 5/9. IGPS catalyzes the conversion of PRFAR and glutamine to IGP, AICAR and glutamate. The HisF subunit catalyzes the cyclization activity that produces IGP and AICAR from PRFAR using the ammonia provided by the HisH subunit. This chain is Imidazole glycerol phosphate synthase subunit HisF, found in Trichlorobacter lovleyi (strain ATCC BAA-1151 / DSM 17278 / SZ) (Geobacter lovleyi).